A 257-amino-acid chain; its full sequence is Reticulon-like protein B4 (257 aa).

Residues 19-42 (IHGHGDSSSLSDSDDDKKSTSSSS) form a disordered region. The 190-residue stretch at 68-257 (PADIFLWRNK…PRGALNKKKD (190 aa)) folds into the Reticulon domain. Transmembrane regions (helical) follow at residues 78–98 (KVSGGVLGAVTASWVLFELFE), 99–119 (YHLLAFLCHFAIFALAALFLW), and 173–193 (FILVIAGLWVLSIIGSCYNFL).

Interacts with VirB2.

The protein localises to the endoplasmic reticulum membrane. Its function is as follows. Plays a role in the Agrobacterium-mediated plant transformation via its interaction with VirB2, the major component of the T-pilus. The polypeptide is Reticulon-like protein B4 (RTNLB4) (Arabidopsis thaliana (Mouse-ear cress)).